The following is a 353-amino-acid chain: Photosystem II protein D1 (353 aa).

The residue at position 2 (threonine 2) is an N-acetylthreonine. Threonine 2 carries the phosphothreonine modification. Helical transmembrane passes span 29–46, 118–133, and 142–156; these read YIGW…TATS, HFLL…EWEL, and WIAV…AATA. Histidine 118 is a chlorophyll a binding site. A pheophytin a-binding site is contributed by tyrosine 126. Positions 170 and 189 each coordinate [CaMn4O5] cluster. Residues 197–218 traverse the membrane as a helical segment; the sequence is FHMLGVAGVFGGSLFSAMHGSL. Histidine 198 lines the chlorophyll a pocket. A quinone contacts are provided by residues histidine 215 and 264 to 265; that span reads SF. Histidine 215 contributes to the Fe cation binding site. A Fe cation-binding site is contributed by histidine 272. The chain crosses the membrane as a helical span at residues 274-288; that stretch reads FLAAWPVVGIWFTAL. Positions 332, 333, 342, and 344 each coordinate [CaMn4O5] cluster. A propeptide spanning residues 345 to 353 is cleaved from the precursor; it reads AVEAPSTNG.

This sequence belongs to the reaction center PufL/M/PsbA/D family. PSII is composed of 1 copy each of membrane proteins PsbA, PsbB, PsbC, PsbD, PsbE, PsbF, PsbH, PsbI, PsbJ, PsbK, PsbL, PsbM, PsbT, PsbX, PsbY, PsbZ, Psb30/Ycf12, at least 3 peripheral proteins of the oxygen-evolving complex and a large number of cofactors. It forms dimeric complexes. Requires The D1/D2 heterodimer binds P680, chlorophylls that are the primary electron donor of PSII, and subsequent electron acceptors. It shares a non-heme iron and each subunit binds pheophytin, quinone, additional chlorophylls, carotenoids and lipids. D1 provides most of the ligands for the Mn4-Ca-O5 cluster of the oxygen-evolving complex (OEC). There is also a Cl(-1) ion associated with D1 and D2, which is required for oxygen evolution. The PSII complex binds additional chlorophylls, carotenoids and specific lipids. as cofactor. Post-translationally, tyr-161 forms a radical intermediate that is referred to as redox-active TyrZ, YZ or Y-Z. In terms of processing, C-terminally processed by CTPA; processing is essential to allow assembly of the oxygen-evolving complex and thus photosynthetic growth.

It is found in the plastid. Its subcellular location is the chloroplast thylakoid membrane. The catalysed reaction is 2 a plastoquinone + 4 hnu + 2 H2O = 2 a plastoquinol + O2. Photosystem II (PSII) is a light-driven water:plastoquinone oxidoreductase that uses light energy to abstract electrons from H(2)O, generating O(2) and a proton gradient subsequently used for ATP formation. It consists of a core antenna complex that captures photons, and an electron transfer chain that converts photonic excitation into a charge separation. The D1/D2 (PsbA/PsbD) reaction center heterodimer binds P680, the primary electron donor of PSII as well as several subsequent electron acceptors. This is Photosystem II protein D1 from Drimys granadensis.